A 668-amino-acid chain; its full sequence is Methionine--tRNA ligase (668 aa).

Residues 11–21 (AYTNGPLHIGH) carry the 'HIGH' region motif. The Zn(2+) site is built by C146, C149, C159, and C162. A 'KMSKS' region motif is present at residues 332-336 (KMSTS). Residue T335 coordinates ATP. Residues 567-668 (EFNRLDLRVG…REVEPGERIR (102 aa)) enclose the tRNA-binding domain.

Belongs to the class-I aminoacyl-tRNA synthetase family. MetG type 1 subfamily. As to quaternary structure, homodimer. Zn(2+) serves as cofactor.

The protein resides in the cytoplasm. The catalysed reaction is tRNA(Met) + L-methionine + ATP = L-methionyl-tRNA(Met) + AMP + diphosphate. In terms of biological role, is required not only for elongation of protein synthesis but also for the initiation of all mRNA translation through initiator tRNA(fMet) aminoacylation. The chain is Methionine--tRNA ligase from Methanopyrus kandleri (strain AV19 / DSM 6324 / JCM 9639 / NBRC 100938).